We begin with the raw amino-acid sequence, 465 residues long: Putative ABC transporter ATP-binding protein MG065 homolog (465 aa).

In terms of domain architecture, ABC transporter spans 232-465 (IELKNVYKYI…PKQVEDINWI (234 aa)). ATP is bound at residue 268 to 275 (GPSGSGKT).

Belongs to the ABC transporter superfamily.

This Mycoplasma pneumoniae (strain ATCC 29342 / M129 / Subtype 1) (Mycoplasmoides pneumoniae) protein is Putative ABC transporter ATP-binding protein MG065 homolog.